The primary structure comprises 344 residues: L-rhamnose-proton symporter (344 aa).

10 consecutive transmembrane segments (helical) span residues 4 to 24 (AITM…CFYA), 38 to 58 (WSVG…ALLL), 74 to 94 (LPVF…GLTM), 101 to 121 (MGIG…TPII), 137 to 157 (TLLG…AGQL), 175 to 195 (LVLA…MNAA), 214 to 234 (LPSY…FCFI), 259 to 279 (VLLS…YAWG), 290 to 310 (ISWM…GLVL), and 323 to 343 (VLSL…IGMA).

This sequence belongs to the L-rhamnose transporter (TC 2.A.7.6) family.

It localises to the cell inner membrane. The catalysed reaction is L-rhamnopyranose(in) + H(+)(in) = L-rhamnopyranose(out) + H(+)(out). In terms of biological role, uptake of L-rhamnose across the cytoplasmic membrane with the concomitant transport of protons into the cell (symport system). In Escherichia coli (strain K12 / MC4100 / BW2952), this protein is L-rhamnose-proton symporter.